Reading from the N-terminus, the 218-residue chain is uncharacterized protein (218 aa).

A run of 2 helical transmembrane segments spans residues L8–G28 and I158–I178.

It localises to the cell membrane. This is an uncharacterized protein from Mycoplasma genitalium (strain ATCC 33530 / DSM 19775 / NCTC 10195 / G37) (Mycoplasmoides genitalium).